Reading from the N-terminus, the 356-residue chain is Chorismate synthase (356 aa).

NADP(+) is bound by residues R44 and R49. Residues 121-123, G278, 293-297, and R320 contribute to the FMN site; these read HFS and KPTPS.

It belongs to the chorismate synthase family. FMNH2 serves as cofactor.

The catalysed reaction is 5-O-(1-carboxyvinyl)-3-phosphoshikimate = chorismate + phosphate. It participates in metabolic intermediate biosynthesis; chorismate biosynthesis; chorismate from D-erythrose 4-phosphate and phosphoenolpyruvate: step 7/7. In terms of biological role, catalyzes the anti-1,4-elimination of the C-3 phosphate and the C-6 proR hydrogen from 5-enolpyruvylshikimate-3-phosphate (EPSP) to yield chorismate, which is the branch point compound that serves as the starting substrate for the three terminal pathways of aromatic amino acid biosynthesis. This reaction introduces a second double bond into the aromatic ring system. In Thermococcus gammatolerans (strain DSM 15229 / JCM 11827 / EJ3), this protein is Chorismate synthase.